Here is a 607-residue protein sequence, read N- to C-terminus: MSKVIGIDLGTTNSCVAVLEGGEPKVIANPEGNRTTPSVVAFKNGETQVGEVAKRQAITNPNTIISIKRHMGTDYKENIEGKEYSPQEISAMILQNLKATAESYLGEKVTKAVITVPAYFNDAERQATKDAGKIAGLEVERIINEPTAAALAYGLDKTDKEQKVLVFDLGGGTFDVSILELGDGVFEVLSTSGDNKLGGDDFDQVIIDYLVEEFKKENGLDLSQDKMAMQRLKDAAEKAKKDLSGVSSTQISLPFISAGEAGPLHLEVTLSRAKFEELSHTLVERTMGPTRQAMKDAGLSNADIDEVILVGGSTRIPAVQEAIKKELGKEPNKGVNPDEVVAMGAAIQGGVITGDVKDVVLLDVTPLSLGIETMGGVSTVLIERNTTIPTSKSQVFSTAADNQPAVDIHVLQGERQMAADNKTLGRFQLTDIPPAPRGVPQIEVTFDIDKNGIVNVTAKDLGTQKEQKITIQSSSSLSDEEIDRMVKDAEANAEADKKRREEVDLRNEADQLVFATDKAIKDLEDKVDAAEKEKAEAAKEELKKALEGNDLEEIKAKKDTLNEIVQGLSMKLYEQMAQAQQGAEGAASQDDDVVDADFTEVKDDDNK.

Threonine 173 carries the post-translational modification Phosphothreonine; by autocatalysis. Over residues 577-588 the composition is skewed to low complexity; sequence AQAQQGAEGAAS. The disordered stretch occupies residues 577–607; that stretch reads AQAQQGAEGAASQDDDVVDADFTEVKDDDNK. Over residues 589-598 the composition is skewed to acidic residues; the sequence is QDDDVVDADF.

The protein belongs to the heat shock protein 70 family.

In terms of biological role, acts as a chaperone. The protein is Chaperone protein DnaK of Macrococcus caseolyticus (strain JCSC5402) (Macrococcoides caseolyticum).